The following is a 163-amino-acid chain: Regulator of chromosome segregation (163 aa).

Interacts with CpsD and ParB.

The protein resides in the cytoplasm. The protein localises to the nucleoid. It localises to the cell membrane. Functionally, required for cell division and chromosome segregation. Binds to DNA and is involved in segregating the origin of replication (oriC) region to new daughter cells. When the nucleoid is not properly segregated, involved in blocking the cell division to protect the nucleoid against premature truncation by the newly forming septum, a function which is dependent on CpsD and its autophosphorylation level. In Streptococcus pneumoniae serotype 2 (strain D39 / NCTC 7466), this protein is Regulator of chromosome segregation.